We begin with the raw amino-acid sequence, 652 residues long: DNA ligase (652 aa).

Residues 29–33 (DSEYD), 78–79 (SL), and Glu-107 contribute to the NAD(+) site. Residue Lys-109 is the N6-AMP-lysine intermediate of the active site. NAD(+) contacts are provided by Arg-130, Glu-164, Lys-278, and Lys-302. Residues Cys-395, Cys-398, Cys-413, and Cys-418 each coordinate Zn(2+). One can recognise a BRCT domain in the interval 577–652 (DQQAALFGLT…IEDEDWLLNL (76 aa)).

It belongs to the NAD-dependent DNA ligase family. LigA subfamily. Requires Mg(2+) as cofactor. It depends on Mn(2+) as a cofactor.

It catalyses the reaction NAD(+) + (deoxyribonucleotide)n-3'-hydroxyl + 5'-phospho-(deoxyribonucleotide)m = (deoxyribonucleotide)n+m + AMP + beta-nicotinamide D-nucleotide.. Functionally, DNA ligase that catalyzes the formation of phosphodiester linkages between 5'-phosphoryl and 3'-hydroxyl groups in double-stranded DNA using NAD as a coenzyme and as the energy source for the reaction. It is essential for DNA replication and repair of damaged DNA. This is DNA ligase from Streptococcus equi subsp. equi (strain 4047).